The chain runs to 149 residues: FAD synthase (149 aa).

ATP is bound by residues 15-16 (VF), 20-23 (HVGH), and D101.

The protein belongs to the archaeal FAD synthase family. As to quaternary structure, homodimer. Requires a divalent metal cation as cofactor.

It catalyses the reaction FMN + ATP + H(+) = FAD + diphosphate. Its pathway is cofactor biosynthesis; FAD biosynthesis; FAD from FMN: step 1/1. Functionally, catalyzes the transfer of the AMP portion of ATP to flavin mononucleotide (FMN) to produce flavin adenine dinucleotide (FAD) coenzyme. In Thermococcus kodakarensis (strain ATCC BAA-918 / JCM 12380 / KOD1) (Pyrococcus kodakaraensis (strain KOD1)), this protein is FAD synthase.